The primary structure comprises 92 residues: Acylphosphatase (92 aa).

The Acylphosphatase-like domain maps to 4–92 (AVQLDVFGRV…SACHKFSVVG (89 aa)). Catalysis depends on residues R19 and N37.

The protein belongs to the acylphosphatase family.

The catalysed reaction is an acyl phosphate + H2O = a carboxylate + phosphate + H(+). This chain is Acylphosphatase (acyP), found in Latilactobacillus sakei subsp. sakei (strain 23K) (Lactobacillus sakei subsp. sakei).